Here is a 163-residue protein sequence, read N- to C-terminus: MDEKREENILKKQEELRLFQEALPRKGRLAGLDVGTKTIGLALCDSQWIIASPAETIRRKKFTLDLELLRQFVEKQQVKGLVIGLPLNLDGSDSPRTQSVRAFAKNVAPLSLPVLMWDERWSTKAVTRTLLEADASRARRSEVVDKMAAAYILQGAIDSFAMF.

The protein belongs to the YqgF nuclease family.

It is found in the cytoplasm. Functionally, could be a nuclease involved in processing of the 5'-end of pre-16S rRNA. This chain is Putative pre-16S rRNA nuclease, found in Zymomonas mobilis subsp. mobilis (strain ATCC 31821 / ZM4 / CP4).